A 1093-amino-acid chain; its full sequence is Leukemia inhibitory factor receptor (1093 aa).

Positions 1-43 (MGAFSWWRQPSWMADNKRGRMTPSLPWLLSALTLLHLMMHVNG) are cleaved as a signal peptide. Over 44–829 (LKRGVQQDLK…SMFVVTKENS (786 aa)) the chain is Extracellular. A Fibronectin type-III 1 domain is found at 45 to 127 (KRGVQQDLKC…QSKFTLNEKD (83 aa)). 2 disulfide bridges follow: Cys-54-Cys-64 and Cys-81-Cys-89. 4 N-linked (GlcNAc...) asparagine glycosylation sites follow: Asn-165, Asn-200, Asn-239, and Asn-262. 2 disulfide bridges follow: Cys-209–Cys-266 and Cys-337–Cys-347. 5 consecutive Fibronectin type-III domains span residues 331 to 428 (VPQK…ERVA), 431 to 530 (VPIS…TEAT), 534 to 625 (GPDT…IPND), 623 to 715 (PNDD…IGYI), and 720 to 829 (PIVA…KENS). Asn-386, Asn-403, Asn-422, Asn-441, Asn-454, and Asn-477 each carry an N-linked (GlcNAc...) asparagine glycan. Cys-462 and Cys-507 are oxidised to a cystine. A WSXWS motif motif is present at residues 515 to 519 (WSKWS). 6 N-linked (GlcNAc...) asparagine glycosylation sites follow: Asn-568, Asn-648, Asn-659, Asn-676, Asn-725, and Asn-783. Residues 830–850 (VGLIIAILIPVAVAVIVGVVT) traverse the membrane as a helical segment. Residues 851–1093 (SILCYRKREW…TNFFQNKPND (243 aa)) lie on the Cytoplasmic side of the membrane. Residues 865-873 (FYPDIPNPE) carry the Box 1 motif motif. Disordered stretches follow at residues 908–941 (ESRS…ENQA) and 1003–1093 (LPIN…KPND). 2 positions are modified to phosphoserine: Ser-923 and Ser-1040. Composition is skewed to polar residues over residues 1028-1063 (ANVN…NSRQ) and 1082-1093 (SFTNFFQNKPND).

The protein belongs to the type I cytokine receptor family. Type 2 subfamily. As to quaternary structure, heterodimer composed of LIFR and IL6ST. The heterodimer formed by LIFR and IL6ST interacts with the complex formed by CNTF and CNTFR.

It localises to the cell membrane. In terms of biological role, signal-transducing molecule. May have a common pathway with IL6ST. The soluble form inhibits the biological activity of LIF by blocking its binding to receptors on target cells. The protein is Leukemia inhibitory factor receptor (Lifr) of Rattus norvegicus (Rat).